Here is a 331-residue protein sequence, read N- to C-terminus: tRNA N6-adenosine threonylcarbamoyltransferase (331 aa).

3 residues coordinate Fe cation: H109, H113, and Y130. Substrate-binding positions include 130-134, D162, D183, and S262; that span reads YLSGG. D290 contacts Fe cation.

This sequence belongs to the KAE1 / TsaD family. Fe(2+) is required as a cofactor.

It is found in the cytoplasm. The enzyme catalyses L-threonylcarbamoyladenylate + adenosine(37) in tRNA = N(6)-L-threonylcarbamoyladenosine(37) in tRNA + AMP + H(+). Its function is as follows. Required for the formation of a threonylcarbamoyl group on adenosine at position 37 (t(6)A37) in tRNAs that read codons beginning with adenine. Is probably involved in the transfer of the threonylcarbamoyl moiety of threonylcarbamoyl-AMP (TC-AMP) to the N6 group of A37. This chain is tRNA N6-adenosine threonylcarbamoyltransferase, found in Saccharolobus islandicus (strain Y.G.57.14 / Yellowstone #1) (Sulfolobus islandicus).